The sequence spans 144 residues: Granulocyte-macrophage colony-stimulating factor (144 aa).

The N-terminal stretch at methionine 1–serine 17 is a signal peptide. Serine 22 carries O-linked (GalNAc...) serine glycosylation. An O-linked (GalNAc...) threonine glycan is attached at threonine 27. N-linked (GlcNAc...) asparagine glycosylation occurs at asparagine 44. Disulfide bonds link cysteine 71–cysteine 113 and cysteine 105–cysteine 138.

The protein belongs to the GM-CSF family. Monomer. The signaling GM-CSF receptor complex is a dodecamer of two head-to-head hexamers of two alpha, two beta, and two ligand subunits.

It localises to the secreted. Its function is as follows. Cytokine that stimulates the growth and differentiation of hematopoietic precursor cells from various lineages, including granulocytes, macrophages, eosinophils and erythrocytes. This Canis lupus familiaris (Dog) protein is Granulocyte-macrophage colony-stimulating factor (CSF2).